Consider the following 303-residue polypeptide: Putative 1-phosphofructokinase (303 aa).

Residues S217–G222 and G249–D250 each bind ATP. Catalysis depends on D250, which acts as the Proton acceptor.

It belongs to the carbohydrate kinase PfkB family.

The enzyme catalyses beta-D-fructose 1-phosphate + ATP = beta-D-fructose 1,6-bisphosphate + ADP + H(+). Catalyzes the ATP-dependent phosphorylation of fructose-l-phosphate to fructose-l,6-bisphosphate. The polypeptide is Putative 1-phosphofructokinase (fruK) (Mycoplasma genitalium (strain ATCC 33530 / DSM 19775 / NCTC 10195 / G37) (Mycoplasmoides genitalium)).